The primary structure comprises 407 residues: Homeobox even-skipped homolog protein 1 (407 aa).

2 disordered regions span residues 29-120 and 137-179; these read EAVG…SDFY and EYQH…ACSA. Residues 102-114 show a composition bias toward polar residues; that stretch reads DSLSGQGQPSSSD. The homeobox DNA-binding region spans 183–242; the sequence is MRRYRTAFTREQIARLEKEFYRENYVSRPRRCELAAALNLPETTIKVWFQNRRMKDKRQR.

Belongs to the even-skipped homeobox family.

The protein resides in the nucleus. Its function is as follows. May play a role in the specification of neuronal cell types. This chain is Homeobox even-skipped homolog protein 1 (EVX1), found in Homo sapiens (Human).